Consider the following 178-residue polypeptide: MSRIGKKPVVIPSGVTINVAAGNKVEVKGAKATLSKTFSTDVTFSVADNVATITPNNNSKNAVAQSGTARAILSNMVEGVSKGFERKLKIIGVGYRAKAQGNELNLTLGFSHPVVYKLPQGITAETPAPTEIILKGADKELLGKVASEIREYRKPEPYKGKGVRYEDEYVAKKEAKKK.

It belongs to the universal ribosomal protein uL6 family. In terms of assembly, part of the 50S ribosomal subunit.

Its function is as follows. This protein binds to the 23S rRNA, and is important in its secondary structure. It is located near the subunit interface in the base of the L7/L12 stalk, and near the tRNA binding site of the peptidyltransferase center. This is Large ribosomal subunit protein uL6 from Francisella tularensis subsp. tularensis (strain FSC 198).